The following is a 225-amino-acid chain: NAD(P)H-quinone oxidoreductase subunit K, chloroplastic (225 aa).

[4Fe-4S] cluster is bound by residues Cys43, Cys44, Cys108, and Cys139.

The protein belongs to the complex I 20 kDa subunit family. NDH is composed of at least 16 different subunits, 5 of which are encoded in the nucleus. [4Fe-4S] cluster is required as a cofactor.

The protein localises to the plastid. The protein resides in the chloroplast thylakoid membrane. The enzyme catalyses a plastoquinone + NADH + (n+1) H(+)(in) = a plastoquinol + NAD(+) + n H(+)(out). It carries out the reaction a plastoquinone + NADPH + (n+1) H(+)(in) = a plastoquinol + NADP(+) + n H(+)(out). Its function is as follows. NDH shuttles electrons from NAD(P)H:plastoquinone, via FMN and iron-sulfur (Fe-S) centers, to quinones in the photosynthetic chain and possibly in a chloroplast respiratory chain. The immediate electron acceptor for the enzyme in this species is believed to be plastoquinone. Couples the redox reaction to proton translocation, and thus conserves the redox energy in a proton gradient. This Arabidopsis thaliana (Mouse-ear cress) protein is NAD(P)H-quinone oxidoreductase subunit K, chloroplastic.